The primary structure comprises 265 residues: Transcriptional activator AggR (265 aa).

The region spanning 164–261 (DKVRNTIEKD…GITPKQFLTY (98 aa)) is the HTH araC/xylS-type domain. 2 DNA-binding regions (H-T-H motif) span residues 181-202 (AIIA…ESEY) and 228-251 (ISQI…VKHF).

As to quaternary structure, homodimer.

Functionally, transcriptional activator of aggregative adherence fimbria I expression in enteroaggregative E.coli. In Escherichia coli, this protein is Transcriptional activator AggR (aggR).